The following is a 397-amino-acid chain: Phosphoglycerate kinase (397 aa).

Substrate contacts are provided by residues 25-27, R41, 64-67, R118, and R151; these read DLN and HLGR. ATP contacts are provided by residues K202, E324, and 350–353; that span reads GGDT.

This sequence belongs to the phosphoglycerate kinase family. As to quaternary structure, monomer.

It localises to the cytoplasm. It catalyses the reaction (2R)-3-phosphoglycerate + ATP = (2R)-3-phospho-glyceroyl phosphate + ADP. The protein operates within carbohydrate degradation; glycolysis; pyruvate from D-glyceraldehyde 3-phosphate: step 2/5. This Paracidovorax citrulli (strain AAC00-1) (Acidovorax citrulli) protein is Phosphoglycerate kinase.